A 462-amino-acid polypeptide reads, in one-letter code: Na(+)/H(+) antiporter NhaA 2 (462 aa).

The disordered stretch occupies residues 1-31 (MKSSTREQTPVTSPTPHDPTPPTPPRGSTPL). Pro residues predominate over residues 16-27 (PHDPTPPTPPRG). Transmembrane regions (helical) follow at residues 52–72 (IGGALLLLGTVVALVWANSPW), 96–116 (LTLGQWAADGLLAIFFFIAGL), 134–154 (LVPVAAAVGGMAVPAVVYVLV), 165–185 (GWAIPTATDIAFAVAVLAVIS), 195–215 (FLLTLAVVDDLLAITIIAIFY), 218–238 (TLAVLPLLGALAVIAVFGLLV), 244–264 (SWWLLIPLAVVAWALMHASGI), 309–329 (FAVPVFAFFSAGVTVGGLSGL), 337–357 (VALGIVAGLVVGKAAGILGAT), 382–402 (LLGGIGFTVSLLIGELAFGAG), and 408–428 (HVKVGVLTGSLLAAALAAVVL).

It belongs to the NhaA Na(+)/H(+) (TC 2.A.33) antiporter family.

The protein resides in the cell membrane. It carries out the reaction Na(+)(in) + 2 H(+)(out) = Na(+)(out) + 2 H(+)(in). Na(+)/H(+) antiporter that extrudes sodium in exchange for external protons. In Kineococcus radiotolerans (strain ATCC BAA-149 / DSM 14245 / SRS30216), this protein is Na(+)/H(+) antiporter NhaA 2.